The chain runs to 177 residues: 2-C-methyl-D-erythritol 2,4-cyclodiphosphate synthase (177 aa).

2 residues coordinate a divalent metal cation: Asp23 and His25. 4-CDP-2-C-methyl-D-erythritol 2-phosphate contacts are provided by residues 23–25 and 49–50; these read DVH and HS. An a divalent metal cation-binding site is contributed by His57. 4-CDP-2-C-methyl-D-erythritol 2-phosphate-binding positions include 71–73, 76–80, 115–121, and Arg157; these read DIG, FSDTD, and AQAPRMA.

The protein belongs to the IspF family. Homotrimer. A divalent metal cation serves as cofactor.

It catalyses the reaction 4-CDP-2-C-methyl-D-erythritol 2-phosphate = 2-C-methyl-D-erythritol 2,4-cyclic diphosphate + CMP. It participates in isoprenoid biosynthesis; isopentenyl diphosphate biosynthesis via DXP pathway; isopentenyl diphosphate from 1-deoxy-D-xylulose 5-phosphate: step 4/6. Functionally, involved in the biosynthesis of isopentenyl diphosphate (IPP) and dimethylallyl diphosphate (DMAPP), two major building blocks of isoprenoid compounds. Catalyzes the conversion of 4-diphosphocytidyl-2-C-methyl-D-erythritol 2-phosphate (CDP-ME2P) to 2-C-methyl-D-erythritol 2,4-cyclodiphosphate (ME-CPP) with a corresponding release of cytidine 5-monophosphate (CMP). This chain is 2-C-methyl-D-erythritol 2,4-cyclodiphosphate synthase, found in Nitrosospira multiformis (strain ATCC 25196 / NCIMB 11849 / C 71).